The following is a 209-amino-acid chain: Cilia- and flagella-associated protein 418 (209 aa).

The tract at residues 1–76 (MAKDLDELLD…LINEIFEEPD (76 aa)) is required for interaction with FAM161A. A disordered region spans residues 24-58 (LDLGERPKGDGGGGSHSGDRNGAQEKETLRSTETF). Basic and acidic residues predominate over residues 40–58 (SGDRNGAQEKETLRSTETF).

In terms of assembly, interacts (via N-terminus) with FAM161A (via central region); the interaction is direct. Expressed in multiple tissues, including the brain, kidney, lung, spleen, heart, trachea and testis. Expressed in the retina (at protein level).

The protein resides in the cytoplasm. The protein localises to the photoreceptor inner segment. In terms of biological role, may be involved in photoreceptor outer segment disk morphogenesis. The sequence is that of Cilia- and flagella-associated protein 418 from Mus musculus (Mouse).